The primary structure comprises 156 residues: MAKKKDSNALAQNRKASFDYAIEDTIEAGMVLTGTEIKSVRQSKINIADAYVRFDGGEATLHNCHISPFEQGNRFNHDPLRVRKLLLHKKQINQLIGASGRDGYTIIPLKVYIKNGFAKCLLGVGKGKKKYDKREDLKKKDAKRDVDRAMRDRQKY.

A disordered region spans residues 127–156 (GKKKYDKREDLKKKDAKRDVDRAMRDRQKY). Positions 132 to 156 (DKREDLKKKDAKRDVDRAMRDRQKY) are enriched in basic and acidic residues.

It belongs to the SmpB family.

It localises to the cytoplasm. Functionally, required for rescue of stalled ribosomes mediated by trans-translation. Binds to transfer-messenger RNA (tmRNA), required for stable association of tmRNA with ribosomes. tmRNA and SmpB together mimic tRNA shape, replacing the anticodon stem-loop with SmpB. tmRNA is encoded by the ssrA gene; the 2 termini fold to resemble tRNA(Ala) and it encodes a 'tag peptide', a short internal open reading frame. During trans-translation Ala-aminoacylated tmRNA acts like a tRNA, entering the A-site of stalled ribosomes, displacing the stalled mRNA. The ribosome then switches to translate the ORF on the tmRNA; the nascent peptide is terminated with the 'tag peptide' encoded by the tmRNA and targeted for degradation. The ribosome is freed to recommence translation, which seems to be the essential function of trans-translation. This Exiguobacterium sp. (strain ATCC BAA-1283 / AT1b) protein is SsrA-binding protein.